The chain runs to 399 residues: Elongation factor Tu (399 aa).

The 200-residue stretch at 10-209 (KPHVNIGTIG…EVDAYIPTPK (200 aa)) folds into the tr-type G domain. The interval 19 to 26 (GHVDHGKT) is G1. 19–26 (GHVDHGKT) contributes to the GTP binding site. Position 26 (threonine 26) interacts with Mg(2+). Residues 60–64 (GITIA) form a G2 region. Positions 81–84 (DCPG) are G3. Residues 81-85 (DCPGH) and 136-139 (NKQD) each bind GTP. Positions 136 to 139 (NKQD) are G4. The segment at 174–176 (SAL) is G5.

This sequence belongs to the TRAFAC class translation factor GTPase superfamily. Classic translation factor GTPase family. EF-Tu/EF-1A subfamily. In terms of assembly, monomer.

The protein localises to the cytoplasm. It catalyses the reaction GTP + H2O = GDP + phosphate + H(+). GTP hydrolase that promotes the GTP-dependent binding of aminoacyl-tRNA to the A-site of ribosomes during protein biosynthesis. This Helicobacter pylori (strain P12) protein is Elongation factor Tu.